A 707-amino-acid chain; its full sequence is Matrix metalloproteinase-9 (707 aa).

Positions 1 to 19 (MSPRQPLVLALLVLGCCSA) are cleaved as a signal peptide. The propeptide at 20–106 (APRRRQPTLV…PRCGVPDVGK (87 aa)) is activation peptide. An N-linked (GlcNAc...) asparagine glycan is attached at Asn-88. Residues 97–104 (PRCGVPDV) carry the Cysteine switch motif. Position 99 (Cys-99) interacts with Zn(2+). Residues Asn-120 and Asn-127 are each glycosylated (N-linked (GlcNAc...) asparagine). Residues Asp-131 and Asp-165 each coordinate Ca(2+). Residues His-175 and Asp-177 each contribute to the Zn(2+) site. Ca(2+) is bound by residues Asp-182, Gly-183, Asp-185, and Leu-187. His-190 contacts Zn(2+). Gly-197, Gln-199, and Asp-201 together coordinate Ca(2+). His-203 serves as a coordination point for Zn(2+). Positions 205, 206, and 208 each coordinate Ca(2+). 3 Fibronectin type-II domains span residues 225 to 273 (ADGA…FCPS), 283 to 331 (ADGK…FCPT), and 342 to 390 (SAGE…FCPD). 6 disulfide bridges follow: Cys-230–Cys-256, Cys-244–Cys-271, Cys-288–Cys-314, Cys-302–Cys-329, Cys-347–Cys-373, and Cys-361–Cys-388. His-401 contributes to the Zn(2+) binding site. Glu-402 is an active-site residue. The Zn(2+) site is built by His-405 and His-411. The segment at 437-508 (RGIQHLYGPN…ASPSAAPTAS (72 aa)) is disordered. A compositionally biased stretch (pro residues) spans 446–467 (NPNPQPPATTTPEPQPTAPPTA). Positions 481-493 (PTTSPTGAPSAGP) are enriched in low complexity. Cys-516 and Cys-704 are oxidised to a cystine. 4 Hemopexin repeats span residues 518–563 (VNVF…WPAL), 564–608 (PAKL…GLGP), 610–657 (VPHV…FPGV), and 658–704 (PLNT…ILHC).

It belongs to the peptidase M10A family. Exists as monomer or homodimer; disulfide-linked. Also exists as heterodimer with LCN2. Macrophages and transformed cell lines produce only the monomeric form. Interacts with ECM1. Zn(2+) is required as a cofactor. Ca(2+) serves as cofactor. In terms of processing, N- and O-glycosylated. In terms of tissue distribution, osteoclasts.

It localises to the secreted. The protein localises to the extracellular space. It is found in the extracellular matrix. It carries out the reaction Cleavage of gelatin types I and V and collagen types IV and V.. In terms of biological role, matrix metalloproteinase that plays an essential role in local proteolysis of the extracellular matrix and in leukocyte migration. Could play a role in bone osteoclastic resorption. Cleaves KiSS1 at a Gly-|-Leu bond. Cleaves NINJ1 to generate the Secreted ninjurin-1 form. Cleaves type IV and type V collagen into large C-terminal three quarter fragments and shorter N-terminal one quarter fragments. Degrades fibronectin but not laminin or Pz-peptide. The protein is Matrix metalloproteinase-9 of Oryctolagus cuniculus (Rabbit).